Here is a 978-residue protein sequence, read N- to C-terminus: Regulator of telomere elongation helicase 1 homolog (978 aa).

The Helicase ATP-binding domain occupies 7 to 318 (NGIPVNFPFE…EDDDAKKDFT (312 aa)). 42–49 (SPTGTGKT) contacts ATP. [4Fe-4S] cluster-binding residues include Cys159, Cys177, Cys186, and Cys222. A DEAH box motif is present at residues 265–268 (DEAH).

The protein belongs to the helicase family. RAD3/XPD subfamily.

It is found in the nucleus. It carries out the reaction ATP + H2O = ADP + phosphate + H(+). In terms of biological role, a probable ATP-dependent DNA helicase implicated in DNA repair and the maintenance of genomic stability. Acts as an anti-recombinase to counteract toxic recombination and limit crossover during meiosis. Regulates meiotic recombination and crossover homeostasis by physically dissociating strand invasion events and thereby promotes noncrossover repair by meiotic synthesis dependent strand annealing (SDSA) as well as disassembly of D loop recombination intermediates. In Culex quinquefasciatus (Southern house mosquito), this protein is Regulator of telomere elongation helicase 1 homolog.